A 377-amino-acid polypeptide reads, in one-letter code: Succinyl-diaminopimelate desuccinylase (377 aa).

His-68 provides a ligand contact to Zn(2+). Asp-70 is a catalytic residue. Asp-101 contributes to the Zn(2+) binding site. The Proton acceptor role is filled by Glu-135. The Zn(2+) site is built by Glu-136, Glu-164, and His-350.

The protein belongs to the peptidase M20A family. DapE subfamily. Homodimer. Requires Zn(2+) as cofactor. Co(2+) is required as a cofactor.

The catalysed reaction is N-succinyl-(2S,6S)-2,6-diaminopimelate + H2O = (2S,6S)-2,6-diaminopimelate + succinate. It functions in the pathway amino-acid biosynthesis; L-lysine biosynthesis via DAP pathway; LL-2,6-diaminopimelate from (S)-tetrahydrodipicolinate (succinylase route): step 3/3. Catalyzes the hydrolysis of N-succinyl-L,L-diaminopimelic acid (SDAP), forming succinate and LL-2,6-diaminopimelate (DAP), an intermediate involved in the bacterial biosynthesis of lysine and meso-diaminopimelic acid, an essential component of bacterial cell walls. This is Succinyl-diaminopimelate desuccinylase from Aliivibrio fischeri (strain ATCC 700601 / ES114) (Vibrio fischeri).